Consider the following 183-residue polypeptide: MVDEIIKSMQSKMDKTVDALKKDFGTIRTGKANPMMVEDVRVDYYGTLTPLNQLGKIACPEPRVILITPFEKGMLKDIEKAIFAASLGLTPNNDGSSIRINIPELTGERRKELAKVVKQKAEEKKVAIRNIRRDANDELKKHQSEMSQDEVKGHQDKIQKITDSYIAKLGDLEKEKEKEITTL.

Residues 134–156 (DANDELKKHQSEMSQDEVKGHQD) are disordered.

It belongs to the RRF family.

It is found in the cytoplasm. Functionally, responsible for the release of ribosomes from messenger RNA at the termination of protein biosynthesis. May increase the efficiency of translation by recycling ribosomes from one round of translation to another. The polypeptide is Ribosome-recycling factor (Leptospira biflexa serovar Patoc (strain Patoc 1 / Ames)).